The sequence spans 508 residues: Lysine--tRNA ligase (508 aa).

Glu403 and Glu410 together coordinate Mg(2+).

The protein belongs to the class-II aminoacyl-tRNA synthetase family. As to quaternary structure, homodimer. It depends on Mg(2+) as a cofactor.

Its subcellular location is the cytoplasm. It catalyses the reaction tRNA(Lys) + L-lysine + ATP = L-lysyl-tRNA(Lys) + AMP + diphosphate. This is Lysine--tRNA ligase from Methanoculleus marisnigri (strain ATCC 35101 / DSM 1498 / JR1).